The sequence spans 357 residues: Arginine kinase Met e 2 (357 aa).

The Phosphagen kinase N-terminal domain occupies 9–91; the sequence is KLEAGFKKLE…FDPIIEDYHV (83 aa). Position 64-68 (64-68) interacts with L-arginine; sequence GVGIY. The Phosphagen kinase C-terminal domain occupies 119–356; it reads FVISTRVRCG…LELIKIEKEM (238 aa). ATP-binding positions include 122 to 126 and H185; that span reads STRVR. E225 provides a ligand contact to L-arginine. R229 is a binding site for ATP. C271 lines the L-arginine pocket. ATP contacts are provided by residues 280-284 and 309-314; these read RASVH and RGTRGE. E314 serves as a coordination point for L-arginine.

Belongs to the ATP:guanido phosphotransferase family.

It carries out the reaction L-arginine + ATP = N(omega)-phospho-L-arginine + ADP + H(+). Its function is as follows. Catalyzes the reversible transfer of high energy ATP gamma-phosphate group to L-arginine. This chain is Arginine kinase Met e 2, found in Metapenaeus ensis (Greasyback shrimp).